The sequence spans 170 residues: Transcriptional repressor NrdR (170 aa).

A zinc finger spans residues 3 to 34 (CPFCRHPDSRVVDSRVTDDGTAIRRRRSCPEC). Residues 46–136 (LSVIKRSGVI…VYRGFESLED (91 aa)) form the ATP-cone domain. Residues 151-170 (ERSETVERGRPVPSRGVDDR) are disordered.

The protein belongs to the NrdR family. Zn(2+) serves as cofactor.

Its function is as follows. Negatively regulates transcription of bacterial ribonucleotide reductase nrd genes and operons by binding to NrdR-boxes. This is Transcriptional repressor NrdR from Acidothermus cellulolyticus (strain ATCC 43068 / DSM 8971 / 11B).